The chain runs to 941 residues: Endoplasmic reticulum aminopeptidase 1 (941 aa).

A topological domain (cytoplasmic) is located at residue Met-1. A helical; Signal-anchor for type II membrane protein membrane pass occupies residues 2-21; the sequence is VFLPLKWSLATMSFLLSSLL. Over 22 to 941 the chain is Lumenal; the sequence is ALLTVSTPSW…WLQSEKLERM (920 aa). 2 N-linked (GlcNAc...) asparagine glycosylation sites follow: Asn-70 and Asn-154. Residues Glu-183 and 317–321 contribute to the substrate site; that span reads GAMEN. Position 353 (His-353) interacts with Zn(2+). Glu-354 (proton acceptor) is an active-site residue. Residues His-357 and Glu-376 each coordinate Zn(2+). Intrachain disulfides connect Cys-404–Cys-443 and Cys-736–Cys-743. Residue Asn-414 is glycosylated (N-linked (GlcNAc...) asparagine). Asn-760 and Asn-901 each carry an N-linked (GlcNAc...) asparagine glycan.

It belongs to the peptidase M1 family. Monomer. May also exist as a heterodimer; with ERAP2. Interacts with RBMX. Zn(2+) is required as a cofactor. N-glycosylated. As to expression, ubiquitous.

It localises to the endoplasmic reticulum membrane. Functionally, aminopeptidase that plays a central role in peptide trimming, a step required for the generation of most HLA class I-binding peptides. Peptide trimming is essential to customize longer precursor peptides to fit them to the correct length required for presentation on MHC class I molecules. Strongly prefers substrates 9-16 residues long. Rapidly degrades 13-mer to a 9-mer and then stops. Preferentially hydrolyzes the residue Leu and peptides with a hydrophobic C-terminus, while it has weak activity toward peptides with charged C-terminus. May play a role in the inactivation of peptide hormones. May be involved in the regulation of blood pressure through the inactivation of angiotensin II and/or the generation of bradykinin in the kidney. The protein is Endoplasmic reticulum aminopeptidase 1 (ERAP1) of Homo sapiens (Human).